Reading from the N-terminus, the 285-residue chain is Glutamate racemase (285 aa).

Substrate-binding positions include 28 to 29 (DS) and 60 to 61 (YG). The Proton donor/acceptor role is filled by cysteine 92. 93–94 (NT) contacts substrate. Residues arginine 104 and 113-119 (GVVPAIK) each bind UDP-N-acetyl-alpha-D-muramoyl-L-alanine. Cysteine 204 acts as the Proton donor/acceptor in catalysis. 205 to 206 (TH) contributes to the substrate binding site.

It belongs to the aspartate/glutamate racemases family. Monomer.

It carries out the reaction L-glutamate = D-glutamate. It functions in the pathway cell wall biogenesis; peptidoglycan biosynthesis. The low basal catalytic activity in increased 1000-fold in the presence of UDP-MurNAc-L-Ala, the product of the preceding enzyme in the peptidoglycan biosynthesis. Its function is as follows. Provides the (R)-glutamate required for cell wall biosynthesis. In Escherichia coli (strain K12), this protein is Glutamate racemase.